Reading from the N-terminus, the 138-residue chain is Ribulose bisphosphate carboxylase small subunit (138 aa).

Belongs to the RuBisCO small chain family. Heterohexadecamer of 8 large and 8 small subunits.

It localises to the plastid. The protein resides in the chloroplast. Its function is as follows. RuBisCO catalyzes two reactions: the carboxylation of D-ribulose 1,5-bisphosphate, the primary event in carbon dioxide fixation, as well as the oxidative fragmentation of the pentose substrate in the photorespiration process. Both reactions occur simultaneously and in competition at the same active site. Although the small subunit is not catalytic it is essential for maximal activity. Carbon dioxide and oxygen bind in the same pocket of the enzyme in a similar manner. The protein is Ribulose bisphosphate carboxylase small subunit of Galdieria sulphuraria (Red alga).